Reading from the N-terminus, the 274-residue chain is Pyrroline-5-carboxylate reductase 3 (274 aa).

An N-acetylalanine modification is found at Ala-2.

It belongs to the pyrroline-5-carboxylate reductase family. In terms of assembly, homodecamer; composed of 5 homodimers.

The protein resides in the cytoplasm. It catalyses the reaction L-proline + NADP(+) = (S)-1-pyrroline-5-carboxylate + NADPH + 2 H(+). The enzyme catalyses L-proline + NAD(+) = (S)-1-pyrroline-5-carboxylate + NADH + 2 H(+). Its pathway is amino-acid biosynthesis; L-proline biosynthesis; L-proline from L-glutamate 5-semialdehyde: step 1/1. Oxidoreductase that catalyzes the last step in proline biosynthesis, which corresponds to the reduction of pyrroline-5-carboxylate (P5C) to L-proline using NAD(P)H. Proline is synthesized from either glutamate or ornithine; both are converted to P5C, and then to proline via pyrroline-5-carboxylate reductases (PYCRs). PYCR3 is exclusively linked to the biosynthesis of proline from ornithine. In Mus musculus (Mouse), this protein is Pyrroline-5-carboxylate reductase 3.